A 756-amino-acid chain; its full sequence is MASTRSIELEHFEERDKRPRPGSRRGAPSSSGGSSISGPKGNGLIPSPAHSAHCSFYRTRTLQALSSEKKAKKARFYRNGDRYFKGLVFAISNDRFRSFDALLIELTRSLSDNVNLPQGVRTIYTIDGSRKVTSLDELLEGESYVCASNEPFRKVDYTKNVNPNWSVNIKGGTTRTLAVASAKSEVKESKDFIKPKLVTVIRSGVKPRKAVRILLNKKTAHSFEQVLTDITEAIKLDSGVVKRLCTLDGKQVTCLQDFFGDDDVFIACGPEKYRYAQDDFVLDHSECRVLKSSYSRASAAKYSGSRSPGFSRRSKSPASVNGTPSSQLSTPKSTKSSSSSPTSPGSFRGLKQISAQGRSSSNVNGGPELDRCLSPEGVNGNRCSESFPLLEKYRIGKVIGDGNFAVVKECVDRYTGKEFALKIIDKAKCCGKEHLIENEVSILRRVKHPNIIMLVEEMETATDLFLVMELVKGGDLFDAITSSTKYTERDGSAMVYNLANALRYLHSLSIVHRDIKPENLLVCEYPDGTKSLKLGDFGLATVVEGPLYTVCGTPTYVAPEIIAETGYGLKVDVWAAGVITYILLCGFPPFRSENNLQEDLFDQILAGKLEFPAPYWDNITDSAKELISQMLQVNVEARCTAGEILSHPWVSDDASQENNMQAEVTGKLKQHFNNALPKQNSTTTGVSVIMNTALDKEGQIFCSKLCQDSSRPSREQTSPVPPSAQEAPPPLESPRPPGPPATSGCDLAGTWRRHRD.

The interval 1 to 44 (MASTRSIELEHFEERDKRPRPGSRRGAPSSSGGSSISGPKGNGL) is disordered. Over residues 7 to 19 (IELEHFEERDKRP) the composition is skewed to basic and acidic residues. The segment covering 24–43 (RRGAPSSSGGSSISGPKGNG) has biased composition (low complexity). Phosphothreonine is present on T61. Doublecortin domains are found at residues 72–158 (KKAR…VDYT) and 196–279 (KLVT…AQDD). Low complexity-rich tracts occupy residues 301–311 (KYSGSRSPGFS) and 323–346 (TPSSQLSTPKSTKSSSSSPTSPGS). Residues 301–375 (KYSGSRSPGF…GPELDRCLSP (75 aa)) are disordered. Positions 353 to 364 (ISAQGRSSSNVN) are enriched in polar residues. A Phosphoserine modification is found at S361. The Protein kinase domain maps to 393-650 (YRIGKVIGDG…AGEILSHPWV (258 aa)). ATP contacts are provided by residues 399 to 407 (IGDGNFAVV) and K422. D514 acts as the Proton acceptor in catalysis. S646 carries the post-translational modification Phosphoserine. Position 665 is a phosphothreonine (T665). Residues 707-756 (QDSSRPSREQTSPVPPSAQEAPPPLESPRPPGPPATSGCDLAGTWRRHRD) form a disordered region. Residues 719-740 (PVPPSAQEAPPPLESPRPPGPP) are compositionally biased toward pro residues.

It belongs to the protein kinase superfamily. CAMK Ser/Thr protein kinase family. CaMK subfamily. As to quaternary structure, binds to and stabilizes microtubules. Interacts with MAPK8IP1/JIP-1, MAPK8IP2/JIP-2, MAPK9/JNK2, PPP1R9B/NEURABIN-2 and actin. Post-translationally, autophosphorylated. Expressed in the central and peripheral nervous system including the brain, spinal cord, cranial and dorsal root ganglia and in the parasympathetic ganglia. Present in neurons, but not in glial cells, in most forebrain areas. Strong expression in the hippocampal CA1 pyramidal cell layer. Expressed in the photoreceptor sensory cilium complex and in eyes. Also detected in individual cells of the olfactory epithelium.

It is found in the cytoplasm. The protein resides in the cytoskeleton. It catalyses the reaction L-seryl-[protein] + ATP = O-phospho-L-seryl-[protein] + ADP + H(+). The catalysed reaction is L-threonyl-[protein] + ATP = O-phospho-L-threonyl-[protein] + ADP + H(+). Its function is as follows. Protein kinase with a significantly reduced Ca(2+)+/CAM affinity and dependence compared to other members of the CaMK family. May play a role in the down-regulation of CRE-dependent gene activation probably by phosphorylation of the CREB coactivator CRTC2/TORC2 and the resulting retention of TORC2 in the cytoplasm. This Mus musculus (Mouse) protein is Serine/threonine-protein kinase DCLK2 (Dclk2).